Consider the following 165-residue polypeptide: MALNLQDKQAIVAEVSEVAKGALSAVVADSRGVTVDKMTELRKAGREAGVYMRVVRNTLLRRAVEGTAFECLKDAFVGPTLIAYSMEHPGAAARLFKEFAKANAKFEVKAAAFEGELIPASQIDRLATLPTYEEAIARLMSTMKEAAAGKLVRTLAAVRDAKEAA.

The protein belongs to the universal ribosomal protein uL10 family. As to quaternary structure, part of the ribosomal stalk of the 50S ribosomal subunit. The N-terminus interacts with L11 and the large rRNA to form the base of the stalk. The C-terminus forms an elongated spine to which L12 dimers bind in a sequential fashion forming a multimeric L10(L12)X complex.

In terms of biological role, forms part of the ribosomal stalk, playing a central role in the interaction of the ribosome with GTP-bound translation factors. The chain is Large ribosomal subunit protein uL10 from Cronobacter sakazakii (strain ATCC BAA-894) (Enterobacter sakazakii).